Reading from the N-terminus, the 480-residue chain is Docking protein 1 (480 aa).

M1 carries the N-acetylmethionine modification. The 117-residue stretch at 3 to 119 (GALMEGPLFL…WVQILCRTAF (117 aa)) folds into the PH domain. S48 bears the Phosphoserine mark. Residues 151 to 259 (EGSQFWVTSQ…QQQKAQGKVG (109 aa)) form the IRS-type PTB domain. The segment covering 253-262 (KAQGKVGQGQ) has biased composition (low complexity). The interval 253–328 (KAQGKVGQGQ…GSTPAGAGEG (76 aa)) is disordered. The segment covering 265 to 276 (TRTDSHDGETEG) has biased composition (basic and acidic residues). 2 positions are modified to phosphoserine: S269 and S290. Phosphotyrosine is present on residues Y295, Y336, and Y340. The residue at position 361 (Y361) is a Phosphotyrosine; by INSR. A Phosphotyrosine modification is found at Y376. Y397 bears the Phosphotyrosine; by INSR mark. The segment at 398–480 (ELPYNPATDD…RVGVKSEGST (83 aa)) is disordered. At Y408 the chain carries Phosphotyrosine. The span at 410-423 (VPPPRSSKPTPAPK) shows a compositional bias: pro residues. S415 carries the post-translational modification Phosphoserine. The segment covering 432–445 (SGTTAGSGSKGSDT) has biased composition (low complexity). The span at 446–455 (ALYSQVQKSG) shows a compositional bias: polar residues. Residue Y448 is modified to Phosphotyrosine.

Belongs to the DOK family. Type A subfamily. In terms of assembly, interacts with RasGAP and INPP5D/SHIP1. Interacts directly with phosphorylated ITGB3. Interacts with SRMS (via the SH2 and SH3 domains). In terms of processing, constitutively tyrosine-phosphorylated. Phosphorylated by TEC. Phosphorylated by LYN. Phosphorylated on tyrosine residues by the insulin receptor kinase. Results in the negative regulation of the insulin signaling pathway. Phosphorylated on tyrosine residues by SRMS.

Its subcellular location is the cytoplasm. It localises to the nucleus. DOK proteins are enzymatically inert adaptor or scaffolding proteins. They provide a docking platform for the assembly of multimolecular signaling complexes. DOK1 appears to be a negative regulator of the insulin signaling pathway. Modulates integrin activation by competing with talin for the same binding site on ITGB3. This is Docking protein 1 (Dok1) from Rattus norvegicus (Rat).